Consider the following 321-residue polypeptide: Probable protein phosphatase 2C 44 (321 aa).

2 disordered regions span residues 1–36 (MVGR…GGKK) and 51–70 (NSSS…NKVT). Positions 9–31 (SASSSASCSPSSSAAGTSSSSSA) are enriched in low complexity. Polar residues predominate over residues 51–69 (NSSSTDTGKGRSKQSSNKV). A PPM-type phosphatase domain is found at 70–319 (THGFHLVEGK…DDISCIVIRF (250 aa)). Positions 107, 108, 271, and 310 each coordinate Mn(2+).

This sequence belongs to the PP2C family. It depends on Mg(2+) as a cofactor. Mn(2+) is required as a cofactor.

It carries out the reaction O-phospho-L-seryl-[protein] + H2O = L-seryl-[protein] + phosphate. The catalysed reaction is O-phospho-L-threonyl-[protein] + H2O = L-threonyl-[protein] + phosphate. This Oryza sativa subsp. japonica (Rice) protein is Probable protein phosphatase 2C 44.